We begin with the raw amino-acid sequence, 353 residues long: 3'(2'),5'-bisphosphate nucleotidase 1 (353 aa).

Catalysis depends on Asp46, which acts as the Proton acceptor. Residues Glu71, Asp134, Ile136, and Asp137 each coordinate Mg(2+). Thr139 (proton acceptor) is an active-site residue. Residues Thr139, His235, Ser259, Lys262, Arg276, and Asp288 each coordinate adenosine 3',5'-bisphosphate. Positions 235, 259, 262, 276, and 288 each coordinate AMP. Asp288 provides a ligand contact to Mg(2+).

The protein belongs to the inositol monophosphatase superfamily. It depends on Mg(2+) as a cofactor. Expressed in roots, leaves, stems, flowers and siliques.

It catalyses the reaction 3'-phosphoadenylyl sulfate + H2O = adenosine 5'-phosphosulfate + phosphate. The enzyme catalyses adenosine 3',5'-bisphosphate + H2O = AMP + phosphate. The catalysed reaction is adenosine 2',5'-bisphosphate + H2O = AMP + phosphate. It carries out the reaction 1D-myo-inositol 1,4-bisphosphate + H2O = 1D-myo-inositol 4-phosphate + phosphate. It catalyses the reaction 1D-myo-inositol 1,3,4-trisphosphate + H2O = 1D-myo-inositol 3,4-bisphosphate + phosphate. Its pathway is signal transduction; phosphatidylinositol signaling pathway. Its activity is regulated as follows. Inhibited non-competitively by Li(+) (IC(50)=0.20 mM) and Na(+) (IC(50)=200 mM). Functionally, phosphatase that converts adenosine 3'-phosphate 5'-phosphosulfate (PAPS) to adenosine 5'-phosphosulfate (APS) and 3'(2')-phosphoadenosine 5'-phosphate (PAP) to AMP. May regulate the flux of sulfur in the sulfur-activation pathway by converting PAPS to APS. May play a role in the biosynthesis of sulfate conjugates and RNA processing. Is also able to hydrolyze inositol 1,4-bisphosphate and inositol 1,3,4-trisphosphate. Could be considered as a negative regulator of abscisic acid (ABA)- and stress-responsive genes, through modulating the inositol 1,4,5-trisphosphate (IP3) turnover. Is also involved in salt tolerance. Acts as a suppressor of virus- and transgene-induced silencing. This chain is 3'(2'),5'-bisphosphate nucleotidase 1, found in Arabidopsis thaliana (Mouse-ear cress).